The primary structure comprises 339 residues: HTH-type transcriptional regulator KdgR (339 aa).

In terms of domain architecture, HTH lacI-type spans 9 to 64 (TTIKDVAECAGVSKSTVSRYINGKIDAISPEKVKNIKKAIAELNYRPSKMAQGLKI). The segment at residues 11–30 (IKDVAECAGVSKSTVSRYIN) is a DNA-binding region (H-T-H motif).

Its function is as follows. Transcriptional repressor of the kdgRKAT and kduID operons for pectin utilization. In Bacillus subtilis (strain 168), this protein is HTH-type transcriptional regulator KdgR (kdgR).